The chain runs to 178 residues: Crossover junction endodeoxyribonuclease RuvC (178 aa).

Active-site residues include D20, E80, and D154. Mg(2+) is bound by residues D20, E80, and D154.

Belongs to the RuvC family. In terms of assembly, homodimer which binds Holliday junction (HJ) DNA. The HJ becomes 2-fold symmetrical on binding to RuvC with unstacked arms; it has a different conformation from HJ DNA in complex with RuvA. In the full resolvosome a probable DNA-RuvA(4)-RuvB(12)-RuvC(2) complex forms which resolves the HJ. The cofactor is Mg(2+).

The protein localises to the cytoplasm. The enzyme catalyses Endonucleolytic cleavage at a junction such as a reciprocal single-stranded crossover between two homologous DNA duplexes (Holliday junction).. Its function is as follows. The RuvA-RuvB-RuvC complex processes Holliday junction (HJ) DNA during genetic recombination and DNA repair. Endonuclease that resolves HJ intermediates. Cleaves cruciform DNA by making single-stranded nicks across the HJ at symmetrical positions within the homologous arms, yielding a 5'-phosphate and a 3'-hydroxyl group; requires a central core of homology in the junction. The consensus cleavage sequence is 5'-(A/T)TT(C/G)-3'. Cleavage occurs on the 3'-side of the TT dinucleotide at the point of strand exchange. HJ branch migration catalyzed by RuvA-RuvB allows RuvC to scan DNA until it finds its consensus sequence, where it cleaves and resolves the cruciform DNA. This Rhodopirellula baltica (strain DSM 10527 / NCIMB 13988 / SH1) protein is Crossover junction endodeoxyribonuclease RuvC.